The sequence spans 675 residues: Vitamin K-dependent protein S (675 aa).

Positions 1 to 24 are cleaved as a signal peptide; the sequence is MRVLGGRTGTLLACLALVLPVLEA. Residues 25–41 constitute a propeptide that is removed on maturation; sequence NFLSRQHASQVLIRRRR. One can recognise a Gla domain in the interval 42 to 87; sequence ANTLLEETKKGNLERECIEELCNKEEAREIFENNPETEYFYPKYLG. 11 positions are modified to 4-carboxyglutamate: Glu-47, Glu-48, Glu-55, Glu-57, Glu-60, Glu-61, Glu-66, Glu-67, Glu-70, Glu-73, and Glu-77. Cys-58 and Cys-63 are disulfide-bonded. Disulfide bonds link Cys-88–Cys-113, Cys-121–Cys-134, Cys-126–Cys-143, Cys-145–Cys-154, Cys-161–Cys-175, Cys-171–Cys-184, Cys-186–Cys-199, Cys-205–Cys-217, Cys-212–Cys-226, Cys-228–Cys-241, Cys-247–Cys-256, Cys-252–Cys-265, Cys-267–Cys-282, Cys-288–Cys-567, Cys-449–Cys-475, and Cys-638–Cys-665. Positions 88–116 are thrombin-sensitive; it reads CLGSFRAGLFTAARLSTNAYPDLRSCVNA. The region spanning 117 to 155 is the EGF-like 1 domain; sequence ISDQCNPLPCNEDGFMTCKDGQATFTCICKSGWQGEKCE. Asp-136 bears the (3R)-3-hydroxyaspartate mark. Residues 157–200 form the EGF-like 2; calcium-binding domain; sequence DINECKDPVNINGGCSQICENTPGSYHCSCKNGFVMLSNKKDCK. Asn-177 is subject to (3R)-3-hydroxyasparagine. In terms of domain architecture, EGF-like 3; calcium-binding spans 201–242; it reads DVDECVLKPSICGTAVCKNIPGDFECECAEGYKYNPVSKSCD. Asn-219 carries the (3R)-3-hydroxyasparagine modification. Residues 243 to 283 form the EGF-like 4; calcium-binding domain; the sequence is DVDECAENLCAQLCVNYPGGYSCYCDGKKGFKLAQDQKSCE. Asn-258 bears the (3R)-3-hydroxyasparagine mark. Laminin G-like domains are found at residues 299-475 and 484-665; these read LLYL…NKHC and YYPG…AHSC. Residues Asn-499 and Asn-509 are each glycosylated (N-linked (GlcNAc...) asparagine).

In terms of processing, the iron and 2-oxoglutarate dependent 3-hydroxylation of aspartate and asparagine is (R) stereospecific within EGF domains. In terms of tissue distribution, plasma.

It is found in the secreted. In terms of biological role, anticoagulant plasma protein; it is a cofactor to activated protein C in the degradation of coagulation factors Va and VIIIa. It helps to prevent coagulation and stimulating fibrinolysis. The protein is Vitamin K-dependent protein S (PROS1) of Bos taurus (Bovine).